We begin with the raw amino-acid sequence, 178 residues long: Large ribosomal subunit protein bL25 (178 aa).

This sequence belongs to the bacterial ribosomal protein bL25 family. CTC subfamily. Part of the 50S ribosomal subunit; part of the 5S rRNA/L5/L18/L25 subcomplex. Contacts the 5S rRNA. Binds to the 5S rRNA independently of L5 and L18.

Functionally, this is one of the proteins that binds to the 5S RNA in the ribosome where it forms part of the central protuberance. This is Large ribosomal subunit protein bL25 from Helicobacter pylori (strain HPAG1).